The following is a 334-amino-acid chain: Fructose-1,6-bisphosphatase class 1 (334 aa).

Residues Glu-90, Asp-113, Leu-115, and Asp-116 each coordinate Mg(2+). Substrate contacts are provided by residues 116 to 119, Asn-209, Tyr-242, and Lys-272; that span reads DGSS. Residue Glu-278 coordinates Mg(2+).

This sequence belongs to the FBPase class 1 family. As to quaternary structure, homotetramer. Requires Mg(2+) as cofactor.

It localises to the cytoplasm. It catalyses the reaction beta-D-fructose 1,6-bisphosphate + H2O = beta-D-fructose 6-phosphate + phosphate. It functions in the pathway carbohydrate biosynthesis; gluconeogenesis. The polypeptide is Fructose-1,6-bisphosphatase class 1 (Actinobacillus pleuropneumoniae serotype 5b (strain L20)).